The chain runs to 585 residues: A-type ATP synthase subunit A (585 aa).

Position 231 to 238 (231 to 238) interacts with ATP; sequence GPFGSGKT.

Belongs to the ATPase alpha/beta chains family. Has multiple subunits with at least A(3), B(3), C, D, E, F, H, I and proteolipid K(x).

The protein localises to the cell membrane. The catalysed reaction is ATP + H2O + 4 H(+)(in) = ADP + phosphate + 5 H(+)(out). In terms of biological role, component of the A-type ATP synthase that produces ATP from ADP in the presence of a proton gradient across the membrane. The A chain is the catalytic subunit. This is A-type ATP synthase subunit A from Thermococcus sibiricus (strain DSM 12597 / MM 739).